The chain runs to 1210 residues: MKSEKVLVLRTCANNMTDHCGLVWPILGLVECKFWEPTIKLENGLTGALWGQGSSAQLSMNADAKWVVCEVTMGDLIFLENNEGVKFPRAEVVHVGTRSSALGYISDNVSKHEACSSNLIEKFTFSDVKSETRNISPALPVTVDNMPNGVNRSTTVRNTQTLETAVYGSTLTGANQSQLIAGYGSTETAGDSSTLIAGYGSTGTSGSDSSIIAGYGSTGTAGSDSSLIAGYGSTQTAGGDSSLTAGYGSTQTAQVGSNLTAGYGSTGTAGPDSSLIAGYGSTQTAGGESSLTAGYGSTQTAQVGSDLTAGYGSTGTAGSDSSLIAGYGSTQTAGGDSSLTAGYGSTQTAQVGSNLTAGYGSTGTAGPDSSLIAGYGSTQTAGGESSLTAGYGSTQTAQVGSDLTAGYGSTGTAGSDSSLIAGYGSTQTAGGESSLTAGYGSTQTAQVGSDLTAGYGSTGTAGSDSSLIAGYGSTQTAGGDSSLTAGYGSTQTAQVGSDLTAGYGSTGTAGSDSSLIAGYGSTQTAGGDSSLTAGYGSTQTAQVGSDLTAGYGSTGTAGSDSSLIAGYGSTQTAGGDSSLTAGYGSTQTAQMGSNLTAGYGSTGTAGSDSSLIAGYGSTQTAGGDSSLTAGYGSTQTAGHGSILTAGYGSTQTAQEGSSLTAGYGSTSTAGPESSLIAGYGSTQTAGHESTLTAGYGSTQTAQEDSSLTAGYGSTSTAGFNSSLIAGYGSTQTSGYESILTAGYGSTQTAQDNSSLTTGYGSTSTAGYQSSLIAGYGSTQTAGYESTLTAGYGSCQTAQEQSWLTTGYGSTSTAGYESRLIAGYGSTQTAGYKSILTAGYGSTQTAQEESSLTAGYGSTSTAGYASSLIAGYGSTQTAGYDSILTAGYGSTLTALDSSTLTAGYGSTETAGFGSSLMAGYGSSQIAGYGSTLTAGYGSTQMAERDSTLTAGYGSTGTAGQDSSLIAGYGSSLTSGMRSYLTAGYGSTLISGLQSVLTAGYGSSLTSGIRSSLTAGYGSNQIASHKSSLIAGHESTQIAGHKSMLIAGKGSSQTAGSRSTLIAGANSVQMAGDRSRLTAGANSIQTAGDRSKLLAGSNSYLTAGDRSKLTAGDDCVLMAGDRSKLTAGKNCVLTAGADSRLIGSLGSTLSGGENSTLIFRCWDGKRYTNVVVKTGTDEVEADVPYQIDEDSNVLIKAEDNSDTPVDQSQIQP.

The segment at 165–1156 (AVYGSTLTGA…LSGGENSTLI (992 aa)) is octapeptide periodicity.

This sequence belongs to the bacterial ice nucleation protein family.

The protein localises to the cell outer membrane. Functionally, ice nucleation proteins enable bacteria to nucleate crystallization in supercooled water. This Pseudomonas fluorescens protein is Ice nucleation protein (inaW).